A 681-amino-acid polypeptide reads, in one-letter code: DNA-directed RNA polymerase subunit beta' (681 aa).

4 residues coordinate Zn(2+): C69, C71, C87, and C90. D489, D491, and D493 together coordinate Mg(2+).

It belongs to the RNA polymerase beta' chain family. RpoC1 subfamily. In terms of assembly, in plastids the minimal PEP RNA polymerase catalytic core is composed of four subunits: alpha, beta, beta', and beta''. When a (nuclear-encoded) sigma factor is associated with the core the holoenzyme is formed, which can initiate transcription. Mg(2+) is required as a cofactor. Zn(2+) serves as cofactor.

Its subcellular location is the plastid. It localises to the chloroplast. It carries out the reaction RNA(n) + a ribonucleoside 5'-triphosphate = RNA(n+1) + diphosphate. In terms of biological role, DNA-dependent RNA polymerase catalyzes the transcription of DNA into RNA using the four ribonucleoside triphosphates as substrates. In Cycas taitungensis (Prince sago), this protein is DNA-directed RNA polymerase subunit beta'.